We begin with the raw amino-acid sequence, 228 residues long: Uridylate kinase (228 aa).

9–10 (GS) provides a ligand contact to ATP. G44 lines the UMP pocket. The ATP site is built by G45 and R49. UMP contacts are provided by residues D66 and 114-120 (IVAAQTT). T140, Y146, and D149 together coordinate ATP.

Belongs to the UMP kinase family. As to quaternary structure, homohexamer.

The protein resides in the cytoplasm. It carries out the reaction UMP + ATP = UDP + ADP. It participates in pyrimidine metabolism; CTP biosynthesis via de novo pathway; UDP from UMP (UMPK route): step 1/1. With respect to regulation, inhibited by UTP. Catalyzes the reversible phosphorylation of UMP to UDP. This is Uridylate kinase from Haloarcula marismortui (strain ATCC 43049 / DSM 3752 / JCM 8966 / VKM B-1809) (Halobacterium marismortui).